The sequence spans 470 residues: Hydroxymethylglutaryl-CoA synthase (470 aa).

Catalysis depends on Glu-100, which acts as the Proton donor/acceptor. The Acyl-thioester intermediate role is filled by Cys-134. Positions 134, 176, 225, 269, 278, 348, and 382 each coordinate (3S)-3-hydroxy-3-methylglutaryl-CoA. His-269 acts as the Proton donor/acceptor in catalysis.

It belongs to the thiolase-like superfamily. HMG-CoA synthase family.

It catalyses the reaction acetoacetyl-CoA + acetyl-CoA + H2O = (3S)-3-hydroxy-3-methylglutaryl-CoA + CoA + H(+). Its pathway is metabolic intermediate biosynthesis; (R)-mevalonate biosynthesis; (R)-mevalonate from acetyl-CoA: step 2/3. Its function is as follows. Hydroxymethylglutaryl-CoA synthase; part of the first module of ergosterol biosynthesis pathway that includes the early steps of the pathway, conserved across all eukaryotes, and which results in the formation of mevalonate from acetyl-coenzyme A (acetyl-CoA). This module also plays a key role in the biosynthesis of triterpenes such as ganoderic acids (GA), a group of highly oxygenated lanostane-type triterpenoids which are well recognized as a main group of unique bioactive compounds in the medicinal mushroom Ganoderma lucidum. In this module, the acetyl-CoA acetyltransferase catalyzes the formation of acetoacetyl-CoA. The hydroxymethylglutaryl-CoA synthase HMGS then condenses acetyl-CoA with acetoacetyl-CoA to form HMG-CoA. The rate-limiting step of the early module is the reduction to mevalonate by the 3-hydroxy-3-methylglutaryl-coenzyme A (HMG-CoA) reductase. This chain is Hydroxymethylglutaryl-CoA synthase, found in Ganoderma lucidum (Ling zhi medicinal fungus).